Here is an 827-residue protein sequence, read N- to C-terminus: MTFCYPCRAFALLTRGFTSFMSGWPRIYYKLLNLPLSILVKSKSIPADPAPELGLDTSRPIMYVLPYNSKADLLTLRAQCLAHDLPDPLEPLEIDGTLLPRYVFIHGGPRVFTYYTPKEESIKLFHDYLDLHRSNPNLDVQMVPVSVMFGRAPGREKGEVNPPLRMLNGVQKFFAVLWLGRDSFVRFSPSVSLRRMADEHGTDKTIAQKLARVARMHFARQRLAAVGPRLPARQDLFNKLLASRAIAKAVEDEARSKKISHEKAQQNAIALMEEIAANFSYEMIRLTDRILGFTWNRLYQGINVHNAERVRQLAHDGHELVYVPCHRSHMDYLLLSYVLYHQGLVPPHIAAGINLNFWPAGPIFRRLGAFFIRRTFKGNKLYSTVFREYLGELFSRGYSVEYFVEGGRSRTGRLLDPKTGTLSMTIQAMLRGGTRPITLIPIYIGYEHVMEVGTYAKELRGATKEKESLPQMLRGLSKLRNLGQGYVNFGEPMPLMTYLNQHVPDWRESIDPIEAVRPAWLTPTVNNIAADLMVRINNAGAANAMNLCCTALLASRQRSLTREQLTEQLNCYLDLMRNVPYSTDSTVPSASASELIDHALQMNKFEVEKDTIGDIIILPREQAVLMTYYRNNIAHMLVLPSLMAAIVTQHRHISRDVLMEHVNVLYPMLKAELFLRWDRDELPDVIDALANEMQRQGLITLQDDELHINPAHSRTLQLLAAGARETLQRYAITFWLLSANPSINRGTLEKESRTVAQRLSVLHGINAPEFFDKAVFSSLVLTLRDEGYISDSGDAEPAETMKVYQLLAELITSDVRLTIESATQGEG.

The short motif at 325 to 330 is the HXXXXD motif element; the sequence is CHRSHM.

It belongs to the GPAT/DAPAT family.

Its subcellular location is the cell inner membrane. The catalysed reaction is sn-glycerol 3-phosphate + an acyl-CoA = a 1-acyl-sn-glycero-3-phosphate + CoA. It functions in the pathway phospholipid metabolism; CDP-diacylglycerol biosynthesis; CDP-diacylglycerol from sn-glycerol 3-phosphate: step 1/3. The chain is Glycerol-3-phosphate acyltransferase from Shigella dysenteriae serotype 1 (strain Sd197).